Consider the following 277-residue polypeptide: Uridine phosphorylase (277 aa).

This sequence belongs to the PNP/UDP phosphorylase family.

The protein localises to the cytoplasm. The catalysed reaction is uridine + phosphate = alpha-D-ribose 1-phosphate + uracil. Its pathway is pyrimidine metabolism; UMP biosynthesis via salvage pathway; uracil from uridine (phosphorylase route): step 1/1. Functionally, catalyzes the reversible phosphorylytic cleavage of uridine to uracil and ribose-1-phosphate. The polypeptide is Uridine phosphorylase (Thermococcus kodakarensis (strain ATCC BAA-918 / JCM 12380 / KOD1) (Pyrococcus kodakaraensis (strain KOD1))).